The chain runs to 488 residues: Proline--tRNA ligase (488 aa).

Belongs to the class-II aminoacyl-tRNA synthetase family. ProS type 3 subfamily. As to quaternary structure, homodimer.

Its subcellular location is the cytoplasm. The enzyme catalyses tRNA(Pro) + L-proline + ATP = L-prolyl-tRNA(Pro) + AMP + diphosphate. Catalyzes the attachment of proline to tRNA(Pro) in a two-step reaction: proline is first activated by ATP to form Pro-AMP and then transferred to the acceptor end of tRNA(Pro). The chain is Proline--tRNA ligase from Borreliella afzelii (strain PKo) (Borrelia afzelii).